We begin with the raw amino-acid sequence, 151 residues long: 3-hydroxyacyl-[acyl-carrier-protein] dehydratase FabZ (151 aa).

The active site involves His57.

This sequence belongs to the thioester dehydratase family. FabZ subfamily.

It localises to the cytoplasm. The catalysed reaction is a (3R)-hydroxyacyl-[ACP] = a (2E)-enoyl-[ACP] + H2O. In terms of biological role, involved in unsaturated fatty acids biosynthesis. Catalyzes the dehydration of short chain beta-hydroxyacyl-ACPs and long chain saturated and unsaturated beta-hydroxyacyl-ACPs. This Synechococcus sp. (strain CC9605) protein is 3-hydroxyacyl-[acyl-carrier-protein] dehydratase FabZ.